A 210-amino-acid polypeptide reads, in one-letter code: Small ribosomal subunit protein uS4 (210 aa).

The 72-residue stretch at 99–170 folds into the S4 RNA-binding domain; the sequence is RRLDNAVFRA…NLEAVVRRGV (72 aa).

This sequence belongs to the universal ribosomal protein uS4 family. Part of the 30S ribosomal subunit. Contacts protein S5. The interaction surface between S4 and S5 is involved in control of translational fidelity.

Its function is as follows. One of the primary rRNA binding proteins, it binds directly to 16S rRNA where it nucleates assembly of the body of the 30S subunit. In terms of biological role, with S5 and S12 plays an important role in translational accuracy. In Desulfotalea psychrophila (strain LSv54 / DSM 12343), this protein is Small ribosomal subunit protein uS4.